We begin with the raw amino-acid sequence, 861 residues long: Interleukin-12 receptor subunit beta-2 (861 aa).

The first 23 residues, 1-23 (MARTVCGCSWALIFIIMSLLVKA), serve as a signal peptide directing secretion. Over 24–622 (KIDVCKRGDV…REFCLQGKAN (599 aa)) the chain is Extracellular. N-linked (GlcNAc...) asparagine glycosylation is found at Asn48, Asn129, Asn166, and Asn271. Fibronectin type-III domains follow at residues 126-224 (QPQN…VVRP), 226-317 (PPWD…TQTP), 318-415 (EKEP…NIAD), 423-520 (APQQ…KHKA), and 521-620 (PLSG…LQGK). A WSXWS motif motif is present at residues 305-309 (WSDWS). Asn347, Asn376, and Asn480 each carry an N-linked (GlcNAc...) asparagine glycan. Residues 623–643 (WSTFVAPSICIAVITVGVFSM) traverse the membrane as a helical segment. Over 644–861 (RCFRQKVFVL…LKMGCGSLML (218 aa)) the chain is Cytoplasmic. The short motif at 662 to 670 (CSREIPDPA) is the Box 1 motif element. Residues 718–761 (FRRPHHPNWPGKGQRLQGRHASEEDTGSSASSPPPPRALTAETG) form a disordered region. Tyr800 is modified (phosphotyrosine).

Belongs to the type I cytokine receptor family. Type 2 subfamily. Heterodimer/heterooligomer; disulfide-linked. The functional high affinity IL12 receptor is composed of I12RB1 and IL12RB2. Il12RB2 binds JAK2 (via its N-terminal) through a membrane-proximal region of the cytoplasmic domain. On IL12 stimulation, phosphorylated on C-terminal tyrosine residues.

The protein resides in the membrane. Functionally, receptor for interleukin-12. This subunit is the signaling component coupling to the JAK2/STAT4 pathway. The protein is Interleukin-12 receptor subunit beta-2 (IL12RB2) of Sus scrofa (Pig).